The chain runs to 200 residues: MQGFKQHTGLVVPLDAANVDTDAIIPKQFLQKVSRLGFGKHLFHDWRFLDDAGEQPNPEFVMNHARYQGASILLARENFGCGSSREHAPWALADYGIRAMIAPSFADIFYGNSINNQMVPVRLTEQEVDELFQYVQATEGAQIEVDLEALKVRANGKEYSFEIDDFRRHCLLNGLDHIGLTLQHEDKIAAFEADIPAFLR.

Belongs to the LeuD family. LeuD type 1 subfamily. Heterodimer of LeuC and LeuD.

The enzyme catalyses (2R,3S)-3-isopropylmalate = (2S)-2-isopropylmalate. Its pathway is amino-acid biosynthesis; L-leucine biosynthesis; L-leucine from 3-methyl-2-oxobutanoate: step 2/4. In terms of biological role, catalyzes the isomerization between 2-isopropylmalate and 3-isopropylmalate, via the formation of 2-isopropylmaleate. This chain is 3-isopropylmalate dehydratase small subunit, found in Vibrio vulnificus (strain YJ016).